The following is a 240-amino-acid chain: Coat protein (240 aa).

A compositionally biased stretch (polar residues) spans M1–D10. Residues M1–L27 form a disordered region.

This sequence belongs to the potexvirus capsid protein family.

The protein resides in the virion. Required for genome encapsidation. Forms ribonucleoprotein complexes along with TGB1 helicase and viral RNA. In Narcissus pseudonarcissus (Daffodil), this protein is Coat protein.